A 123-amino-acid polypeptide reads, in one-letter code: NADH-quinone oxidoreductase subunit A (123 aa).

Helical transmembrane passes span 6–26, 66–86, and 93–113; these read LTPY…AMLI, VVAL…PWAV, and WFGY…LIYI.

This sequence belongs to the complex I subunit 3 family. NDH-1 is composed of 14 different subunits. Subunits NuoA, H, J, K, L, M, N constitute the membrane sector of the complex.

The protein localises to the cell inner membrane. It carries out the reaction a quinone + NADH + 5 H(+)(in) = a quinol + NAD(+) + 4 H(+)(out). Its function is as follows. NDH-1 shuttles electrons from NADH, via FMN and iron-sulfur (Fe-S) centers, to quinones in the respiratory chain. The immediate electron acceptor for the enzyme in this species is believed to be ubiquinone. Couples the redox reaction to proton translocation (for every two electrons transferred, four hydrogen ions are translocated across the cytoplasmic membrane), and thus conserves the redox energy in a proton gradient. In Myxococcus xanthus (strain DK1622), this protein is NADH-quinone oxidoreductase subunit A.